A 165-amino-acid chain; its full sequence is Trypsin alpha-3 (165 aa).

Residues 1–163 form the Peptidase S1 domain; it reads NSGGVLVSVA…LRSWVVSAAN (163 aa). D26 serves as the catalytic Charge relay system. 2 disulfides stabilise this stretch: C89–C106 and C115–C139. The active-site Charge relay system is the S119.

This sequence belongs to the peptidase S1 family.

The protein localises to the secreted. The protein resides in the extracellular space. The enzyme catalyses Preferential cleavage: Arg-|-Xaa, Lys-|-Xaa.. This is Trypsin alpha-3 from Lucilia cuprina (Green bottle fly).